The following is a 127-amino-acid chain: Ribonuclease VapC6 (127 aa).

In terms of domain architecture, PINc spans 26–120; sequence EPQRAEFCRS…ERHLPDIRVR (95 aa). Aspartate 86 serves as a coordination point for Mg(2+).

The protein belongs to the PINc/VapC protein family. Mg(2+) serves as cofactor.

In terms of biological role, toxic component of a type II toxin-antitoxin (TA) system. An RNase. The cognate antitoxin is VapB6. This is Ribonuclease VapC6 from Mycobacterium tuberculosis (strain CDC 1551 / Oshkosh).